The following is a 282-amino-acid chain: Putative quercetin 2,3-dioxygenase VC_A0969 (282 aa).

A disordered region spans residues Met-1–Gly-21. A divalent metal cation contacts are provided by His-59, His-61, His-103, and Glu-105.

It belongs to the pirin family. It depends on a divalent metal cation as a cofactor.

The catalysed reaction is quercetin + O2 = 2-(3,4-dihydroxybenzoyloxy)-4,6-dihydroxybenzoate + CO. The protein operates within flavonoid metabolism; quercetin degradation. Putative quercetin 2,3-dioxygenase. In Vibrio cholerae serotype O1 (strain ATCC 39315 / El Tor Inaba N16961), this protein is Putative quercetin 2,3-dioxygenase VC_A0969.